The chain runs to 464 residues: ATP synthase subunit beta 2 (464 aa).

147-154 (GGAGVGKT) is an ATP binding site.

Belongs to the ATPase alpha/beta chains family. As to quaternary structure, F-type ATPases have 2 components, CF(1) - the catalytic core - and CF(0) - the membrane proton channel. CF(1) has five subunits: alpha(3), beta(3), gamma(1), delta(1), epsilon(1). CF(0) has four main subunits: a(1), b(1), b'(1) and c(9-12).

The protein resides in the cell inner membrane. The enzyme catalyses ATP + H2O + 4 H(+)(in) = ADP + phosphate + 5 H(+)(out). Produces ATP from ADP in the presence of a proton gradient across the membrane. The catalytic sites are hosted primarily by the beta subunits. This Cereibacter sphaeroides (strain ATCC 17023 / DSM 158 / JCM 6121 / CCUG 31486 / LMG 2827 / NBRC 12203 / NCIMB 8253 / ATH 2.4.1.) (Rhodobacter sphaeroides) protein is ATP synthase subunit beta 2.